We begin with the raw amino-acid sequence, 219 residues long: Uracil-DNA glycosylase (219 aa).

The Proton acceptor role is filled by D61.

Belongs to the uracil-DNA glycosylase (UDG) superfamily. UNG family.

Its subcellular location is the cytoplasm. The catalysed reaction is Hydrolyzes single-stranded DNA or mismatched double-stranded DNA and polynucleotides, releasing free uracil.. In terms of biological role, excises uracil residues from the DNA which can arise as a result of misincorporation of dUMP residues by DNA polymerase or due to deamination of cytosine. This chain is Uracil-DNA glycosylase, found in Exiguobacterium sibiricum (strain DSM 17290 / CCUG 55495 / CIP 109462 / JCM 13490 / 255-15).